The following is a 208-amino-acid chain: Troponin I, cardiac muscle (208 aa).

Disordered stretches follow at residues 1–37 (MAEE…KISA), 54–74 (DLER…GELC), and 168–208 (VRKD…GGQS). N-acetylalanine is present on Ala-2. Residues 28 to 73 (HAKRQSKISASRKLQLKTLLLQRAKRDLEREEQERAGEKQRHLGEL) form an involved in binding TNC region. Basic and acidic residues-rich tracts occupy residues 54-71 (DLER…RHLG) and 168-187 (VRKD…RKNV).

The protein belongs to the troponin I family. As to quaternary structure, binds to actin and tropomyosin.

In terms of biological role, troponin I is the inhibitory subunit of troponin, the thin filament regulatory complex which confers calcium-sensitivity to striated muscle actomyosin ATPase activity. This Coturnix japonica (Japanese quail) protein is Troponin I, cardiac muscle (TNNI3).